The following is a 624-amino-acid chain: DNA (cytosine-5)-methyltransferase DRM1 (624 aa).

UBA domains follow at residues 57–100 and 108–149; these read RISD…LFNY and SSKS…LLTY. Positions 160-189 are disordered; sequence DMNININDDDDDNLYSLSSDDEEDELNNSS. The segment covering 166 to 185 has biased composition (acidic residues); it reads NDDDDDNLYSLSSDDEEDEL. One can recognise a UBA 3 domain in the interval 188–231; it reads SSNEDRILQALIKMGYLREDAAIAIERCGEDASMEEVVDFICAA. The SAM-dependent MTase DRM-type domain occupies 291-622; it reads MHRPVPIPDI…EAVRRKARHM (332 aa).

This sequence belongs to the class I-like SAM-binding methyltransferase superfamily. DRM-methyltransferase family.

The protein resides in the nucleus. It catalyses the reaction a 2'-deoxycytidine in DNA + S-adenosyl-L-methionine = a 5-methyl-2'-deoxycytidine in DNA + S-adenosyl-L-homocysteine + H(+). Functionally, involved in de novo DNA methylation. Controls asymmetric and CpNpG methylation. Required for FWA gene silencing but not for the maintenance of SUP gene silencing. Functionally redundant to CMT3 to maintain non-CpG methylation. Involved in RNA-directed DNA methylation. In Arabidopsis thaliana (Mouse-ear cress), this protein is DNA (cytosine-5)-methyltransferase DRM1 (DRM1).